We begin with the raw amino-acid sequence, 542 residues long: CTP synthase (542 aa).

The tract at residues 1–266 (MATNYIFVTG…DEFVCNRFHL (266 aa)) is amidoligase domain. Serine 14 lines the CTP pocket. Residue serine 14 participates in UTP binding. Residues 15–20 (SLGKGI) and aspartate 72 each bind ATP. Aspartate 72 and glutamate 140 together coordinate Mg(2+). Residues 147-149 (DIE), 187-192 (KTKPTQ), and lysine 223 each bind CTP. UTP contacts are provided by residues 187–192 (KTKPTQ) and lysine 223. 239–241 (KDV) provides a ligand contact to ATP. The Glutamine amidotransferase type-1 domain maps to 291-542 (TIGMVGKYVE…VKAAKENQKK (252 aa)). Glycine 352 is an L-glutamine binding site. The active-site Nucleophile; for glutamine hydrolysis is the cysteine 379. L-glutamine-binding positions include 380–383 (LGMQ), glutamate 403, and arginine 470. Active-site residues include histidine 515 and glutamate 517.

This sequence belongs to the CTP synthase family. As to quaternary structure, homotetramer.

The catalysed reaction is UTP + L-glutamine + ATP + H2O = CTP + L-glutamate + ADP + phosphate + 2 H(+). It carries out the reaction L-glutamine + H2O = L-glutamate + NH4(+). The enzyme catalyses UTP + NH4(+) + ATP = CTP + ADP + phosphate + 2 H(+). The protein operates within pyrimidine metabolism; CTP biosynthesis via de novo pathway; CTP from UDP: step 2/2. Allosterically activated by GTP, when glutamine is the substrate; GTP has no effect on the reaction when ammonia is the substrate. The allosteric effector GTP functions by stabilizing the protein conformation that binds the tetrahedral intermediate(s) formed during glutamine hydrolysis. Inhibited by the product CTP, via allosteric rather than competitive inhibition. Catalyzes the ATP-dependent amination of UTP to CTP with either L-glutamine or ammonia as the source of nitrogen. Regulates intracellular CTP levels through interactions with the four ribonucleotide triphosphates. The polypeptide is CTP synthase (Actinobacillus succinogenes (strain ATCC 55618 / DSM 22257 / CCUG 43843 / 130Z)).